Here is a 190-residue protein sequence, read N- to C-terminus: Protein OPG209 (190 aa).

It belongs to the orthopoxvirus OPG209 protein family.

In Bos taurus (Bovine), this protein is Protein OPG209 (OPG209).